The sequence spans 121 residues: LOB domain-containing protein 23 (121 aa).

The LOB domain occupies 4-105; sequence KRCAACKYLR…NELAKTQAEI (102 aa).

This sequence belongs to the LOB domain-containing protein family.

This is LOB domain-containing protein 23 (LBD23) from Arabidopsis thaliana (Mouse-ear cress).